A 232-amino-acid chain; its full sequence is Pseudaminic acid cytidylyltransferase (232 aa).

Belongs to the CMP-NeuNAc synthase family. The cofactor is Mg(2+).

It carries out the reaction pseudaminate + CTP = CMP-pseudaminate + diphosphate. Functionally, catalyzes the final step in the biosynthesis of pseudaminic acid, a sialic-acid-like sugar that is used to modify flagellin. Mediates the activation of pseudaminic acid with CMP by forming CMP-pseudaminic acid. In Campylobacter jejuni subsp. jejuni serotype O:2 (strain ATCC 700819 / NCTC 11168), this protein is Pseudaminic acid cytidylyltransferase (pseF).